Consider the following 227-residue polypeptide: Leucyl/phenylalanyl-tRNA--protein transferase (227 aa).

The protein belongs to the L/F-transferase family.

The protein localises to the cytoplasm. It catalyses the reaction N-terminal L-lysyl-[protein] + L-leucyl-tRNA(Leu) = N-terminal L-leucyl-L-lysyl-[protein] + tRNA(Leu) + H(+). The catalysed reaction is N-terminal L-arginyl-[protein] + L-leucyl-tRNA(Leu) = N-terminal L-leucyl-L-arginyl-[protein] + tRNA(Leu) + H(+). It carries out the reaction L-phenylalanyl-tRNA(Phe) + an N-terminal L-alpha-aminoacyl-[protein] = an N-terminal L-phenylalanyl-L-alpha-aminoacyl-[protein] + tRNA(Phe). Functionally, functions in the N-end rule pathway of protein degradation where it conjugates Leu, Phe and, less efficiently, Met from aminoacyl-tRNAs to the N-termini of proteins containing an N-terminal arginine or lysine. In Afipia carboxidovorans (strain ATCC 49405 / DSM 1227 / KCTC 32145 / OM5) (Oligotropha carboxidovorans), this protein is Leucyl/phenylalanyl-tRNA--protein transferase.